The following is a 440-amino-acid chain: Thymidine phosphorylase (440 aa).

Belongs to the thymidine/pyrimidine-nucleoside phosphorylase family. As to quaternary structure, homodimer.

It carries out the reaction thymidine + phosphate = 2-deoxy-alpha-D-ribose 1-phosphate + thymine. Its pathway is pyrimidine metabolism; dTMP biosynthesis via salvage pathway; dTMP from thymine: step 1/2. The enzymes which catalyze the reversible phosphorolysis of pyrimidine nucleosides are involved in the degradation of these compounds and in their utilization as carbon and energy sources, or in the rescue of pyrimidine bases for nucleotide synthesis. This is Thymidine phosphorylase from Escherichia coli O127:H6 (strain E2348/69 / EPEC).